A 287-amino-acid polypeptide reads, in one-letter code: MQTATRLERMHGHLALDFTLKQQRTRLTVREHRPPLQVVRDFGLADGTSFVHLHNVAGGVLAGDQLTTTIKLAASTKAQLTTTSSTRIYRSDGEQIAYQQVQATLAEQSLLEYWPDTTIPFAESLYQQQTRIDLAADAGLCWWEFLAPGREAYGERFAYRQLRLDCDIYALGRPILLDRMRLQPSLQQLSNPLYFGKYSYLATGYICRVGWDAVQWKALEAELMAFAASQTKLGRCLWGVSCLAAHGLVIRGLSSNSRDLLATAFDYWRFAKQALYGTTPNLPRKIY.

Belongs to the UreD family. In terms of assembly, ureD, UreF and UreG form a complex that acts as a GTP-hydrolysis-dependent molecular chaperone, activating the urease apoprotein by helping to assemble the nickel containing metallocenter of UreC. The UreE protein probably delivers the nickel.

The protein localises to the cytoplasm. Required for maturation of urease via the functional incorporation of the urease nickel metallocenter. In Herpetosiphon aurantiacus (strain ATCC 23779 / DSM 785 / 114-95), this protein is Urease accessory protein UreD.